A 494-amino-acid polypeptide reads, in one-letter code: Anthranilate synthase component 1 (494 aa).

L-tryptophan contacts are provided by residues S50 and P276–M278. G311 to T312 contacts chorismate. Residue E338 coordinates Mg(2+). Residues Y426, R446, G460–G462, and G462 each bind chorismate. Residue E475 coordinates Mg(2+).

It belongs to the anthranilate synthase component I family. Heterotetramer consisting of two non-identical subunits: a beta subunit (TrpG) and a large alpha subunit (TrpE). Mg(2+) serves as cofactor.

It carries out the reaction chorismate + L-glutamine = anthranilate + pyruvate + L-glutamate + H(+). The protein operates within amino-acid biosynthesis; L-tryptophan biosynthesis; L-tryptophan from chorismate: step 1/5. Feedback inhibited by tryptophan. Part of a heterotetrameric complex that catalyzes the two-step biosynthesis of anthranilate, an intermediate in the biosynthesis of L-tryptophan. In the first step, the glutamine-binding beta subunit (TrpG) of anthranilate synthase (AS) provides the glutamine amidotransferase activity which generates ammonia as a substrate that, along with chorismate, is used in the second step, catalyzed by the large alpha subunit of AS (TrpE) to produce anthranilate. In the absence of TrpG, TrpE can synthesize anthranilate directly from chorismate and high concentrations of ammonia. The sequence is that of Anthranilate synthase component 1 (trpE) from Acetivibrio thermocellus (Hungateiclostridium thermocellum).